We begin with the raw amino-acid sequence, 341 residues long: Ketol-acid reductoisomerase (NADP(+)) (341 aa).

Positions 1–182 (MTEMFYDDDA…GGTRAGVIKT (182 aa)) constitute a KARI N-terminal Rossmann domain. Residues 25–28 (YGSQ), Lys48, Ser51, Ser53, and 83–86 (DQHQ) contribute to the NADP(+) site. His108 is a catalytic residue. Residue Gly134 participates in NADP(+) binding. Residues 183–328 (TFTEETETDL…RELRGLFSWQ (146 aa)) enclose the KARI C-terminal knotted domain. 4 residues coordinate Mg(2+): Asp191, Glu195, Glu227, and Glu231. Substrate is bound at residue Ser252.

It belongs to the ketol-acid reductoisomerase family. The cofactor is Mg(2+).

It carries out the reaction (2R)-2,3-dihydroxy-3-methylbutanoate + NADP(+) = (2S)-2-acetolactate + NADPH + H(+). The catalysed reaction is (2R,3R)-2,3-dihydroxy-3-methylpentanoate + NADP(+) = (S)-2-ethyl-2-hydroxy-3-oxobutanoate + NADPH + H(+). It participates in amino-acid biosynthesis; L-isoleucine biosynthesis; L-isoleucine from 2-oxobutanoate: step 2/4. It functions in the pathway amino-acid biosynthesis; L-valine biosynthesis; L-valine from pyruvate: step 2/4. In terms of biological role, involved in the biosynthesis of branched-chain amino acids (BCAA). Catalyzes an alkyl-migration followed by a ketol-acid reduction of (S)-2-acetolactate (S2AL) to yield (R)-2,3-dihydroxy-isovalerate. In the isomerase reaction, S2AL is rearranged via a Mg-dependent methyl migration to produce 3-hydroxy-3-methyl-2-ketobutyrate (HMKB). In the reductase reaction, this 2-ketoacid undergoes a metal-dependent reduction by NADPH to yield (R)-2,3-dihydroxy-isovalerate. The sequence is that of Ketol-acid reductoisomerase (NADP(+)) from Arthrobacter sp. (strain FB24).